Here is a 428-residue protein sequence, read N- to C-terminus: Zinc metalloproteinase nas-27 (428 aa).

A signal peptide spans 1–17 (MQILPIFFPLLITSLHA). Residues 18–57 (IPRGRRAVRNRNEGDINSLVGVGQYLYQGDIAVVKSRARR) constitute a propeptide that is removed on maturation. The Peptidase M12A domain occupies 58-255 (AVIRQKHKKW…SRMNVLYNCH (198 aa)). 6 disulfide bridges follow: C99–C254, C120–C141, C258–C276, C281–C290, C306–C339, and C366–C386. H150 contacts Zn(2+). E151 is a catalytic residue. Zn(2+)-binding residues include H154 and H160. Residue N181 is glycosylated (N-linked (GlcNAc...) asparagine). Residues 250 to 291 (VLYNCHERCANTLNRCQQGGYPAPSDCSQCVCPDGFGGNFCE) enclose the EGF-like domain. The CUB domain maps to 306–428 (CGGVLWASET…LDFNIEYRAV (123 aa)). The N-linked (GlcNAc...) asparagine glycan is linked to N377.

Zn(2+) serves as cofactor.

It is found in the secreted. Its function is as follows. Metalloprotease. The chain is Zinc metalloproteinase nas-27 (nas-27) from Caenorhabditis elegans.